The sequence spans 80 residues: RNA-binding protein KhpA (80 aa).

The KH domain occupies 33–80 (GRTVEVHVHPDDLGKVIGRGGRTATALRTLVAGIGGRGIRVDVVDTDQ).

The protein belongs to the KhpA RNA-binding protein family.

It localises to the cytoplasm. In terms of biological role, a probable RNA-binding protein. The sequence is that of RNA-binding protein KhpA from Mycobacterium bovis (strain ATCC BAA-935 / AF2122/97).